The chain runs to 77 residues: NAD(P)H-quinone oxidoreductase subunit L (77 aa).

Transmembrane regions (helical) follow at residues 12–32 and 47–67; these read FVAY…ILFY and LGVY…SPFL.

It belongs to the complex I NdhL subunit family. NDH-1 can be composed of about 15 different subunits; different subcomplexes with different compositions have been identified which probably have different functions.

Its subcellular location is the cellular thylakoid membrane. The enzyme catalyses a plastoquinone + NADH + (n+1) H(+)(in) = a plastoquinol + NAD(+) + n H(+)(out). It carries out the reaction a plastoquinone + NADPH + (n+1) H(+)(in) = a plastoquinol + NADP(+) + n H(+)(out). Functionally, NDH-1 shuttles electrons from an unknown electron donor, via FMN and iron-sulfur (Fe-S) centers, to quinones in the respiratory and/or the photosynthetic chain. The immediate electron acceptor for the enzyme in this species is believed to be plastoquinone. Couples the redox reaction to proton translocation, and thus conserves the redox energy in a proton gradient. Cyanobacterial NDH-1 also plays a role in inorganic carbon-concentration. In Prochlorococcus marinus (strain MIT 9515), this protein is NAD(P)H-quinone oxidoreductase subunit L.